The chain runs to 219 residues: uncharacterized protein (219 aa).

An ACT domain is found at 4 to 79; it reads GLRIIAENKI…YIIEIEEEES (76 aa).

This is an uncharacterized protein from Archaeoglobus fulgidus (strain ATCC 49558 / DSM 4304 / JCM 9628 / NBRC 100126 / VC-16).